The sequence spans 834 residues: Periplasmic nitrate reductase (834 aa).

Residues 1-32 (MTDMKIDRRQMLKLEAAAIAAAAAGMPSTSLA) constitute a signal peptide (tat-type signal). The 4Fe-4S Mo/W bis-MGD-type domain maps to 44–100 (LKWDKAACRFCGTGCSVMVATKDNRVVATHGDIKAEVNRGLNCVKGYFLSKIMYGHD). [4Fe-4S] cluster contacts are provided by C51, C54, C58, and C86. Mo-bis(molybdopterin guanine dinucleotide) contacts are provided by residues K88, Q155, N180, C184, 217-224 (WGSNMAEM), 248-252 (STFEH), 267-269 (QTD), M378, Q382, N488, 514-515 (SD), K537, D564, and 724-733 (TGRVVEHWHS). W800 lines the substrate pocket. Mo-bis(molybdopterin guanine dinucleotide) contacts are provided by N808 and K825.

Belongs to the prokaryotic molybdopterin-containing oxidoreductase family. NasA/NapA/NarB subfamily. Component of the periplasmic nitrate reductase NapAB complex composed of NapA and NapB. [4Fe-4S] cluster is required as a cofactor. Mo-bis(molybdopterin guanine dinucleotide) serves as cofactor. Post-translationally, predicted to be exported by the Tat system. The position of the signal peptide cleavage has not been experimentally proven.

The protein resides in the periplasm. The catalysed reaction is 2 Fe(II)-[cytochrome] + nitrate + 2 H(+) = 2 Fe(III)-[cytochrome] + nitrite + H2O. Its function is as follows. Catalytic subunit of the periplasmic nitrate reductase complex NapAB. Receives electrons from NapB and catalyzes the reduction of nitrate to nitrite. The polypeptide is Periplasmic nitrate reductase (Bradyrhizobium sp. (strain BTAi1 / ATCC BAA-1182)).